The following is a 253-amino-acid chain: Triosephosphate isomerase (253 aa).

9–11 (NWK) contributes to the substrate binding site. Histidine 95 acts as the Electrophile in catalysis. Glutamate 167 acts as the Proton acceptor in catalysis. Substrate contacts are provided by residues glycine 173, serine 213, and 234 to 235 (GG). Serine 213 bears the Phosphoserine mark.

This sequence belongs to the triosephosphate isomerase family. Homodimer.

It is found in the cytoplasm. The enzyme catalyses D-glyceraldehyde 3-phosphate = dihydroxyacetone phosphate. It functions in the pathway carbohydrate biosynthesis; gluconeogenesis. Its pathway is carbohydrate degradation; glycolysis; D-glyceraldehyde 3-phosphate from glycerone phosphate: step 1/1. Its function is as follows. Involved in the gluconeogenesis. Catalyzes stereospecifically the conversion of dihydroxyacetone phosphate (DHAP) to D-glyceraldehyde-3-phosphate (G3P). The chain is Triosephosphate isomerase from Geobacillus kaustophilus (strain HTA426).